We begin with the raw amino-acid sequence, 956 residues long: Glycine dehydrogenase (decarboxylating) 2 (956 aa).

Lysine 706 is modified (N6-(pyridoxal phosphate)lysine).

Belongs to the GcvP family. As to quaternary structure, the glycine cleavage system is composed of four proteins: P, T, L and H. Requires pyridoxal 5'-phosphate as cofactor.

The catalysed reaction is N(6)-[(R)-lipoyl]-L-lysyl-[glycine-cleavage complex H protein] + glycine + H(+) = N(6)-[(R)-S(8)-aminomethyldihydrolipoyl]-L-lysyl-[glycine-cleavage complex H protein] + CO2. Functionally, the glycine cleavage system catalyzes the degradation of glycine. The P protein binds the alpha-amino group of glycine through its pyridoxal phosphate cofactor; CO(2) is released and the remaining methylamine moiety is then transferred to the lipoamide cofactor of the H protein. This is Glycine dehydrogenase (decarboxylating) 2 from Colwellia psychrerythraea (strain 34H / ATCC BAA-681) (Vibrio psychroerythus).